Here is a 959-residue protein sequence, read N- to C-terminus: Probable LRR receptor-like serine/threonine-protein kinase At5g37450 (959 aa).

A signal peptide spans 1-24 (MKEMMGVVGIILVVSSCCLSLLDA). Residues 25-565 (QEITHPTDVS…SGMSIGVSVG (541 aa)) are Extracellular-facing. Residues asparagine 62, asparagine 88, asparagine 102, and asparagine 123 are each glycosylated (N-linked (GlcNAc...) asparagine). 9 LRR repeats span residues 79 to 100 (VKELRLLNMNLTGQLAPELGLL), 101 to 124 (SNLTILNFMWNDLTGQIPPELGNL), 125 to 148 (THLIFLLLSGNQLTGSLPQELGSL), 149 to 172 (SNLLILQIDYNEISGKLPTSLANL), 173 to 198 (KKLKHFHMNNNSITGQIPPEYSTLTN), 200 to 220 (LHFLMDNNKLTGNLPPELAQM), 221 to 244 (PSLRILQLDGSNFDGTEIPSSYGS), 246 to 268 (PNLVKLSLRNCNLEGPIPDLSKS), and 269 to 292 (LVLYYLDISSNKLTGEIPKNKFSA). N-linked (GlcNAc...) asparagine glycosylation is present at asparagine 182. 6 N-linked (GlcNAc...) asparagine glycosylation sites follow: asparagine 293, asparagine 311, asparagine 327, asparagine 358, asparagine 369, and asparagine 510. LRR repeat units follow at residues 294-314 (ITTINLYNNLLSGSIPSNFSG), 315-338 (LPRLQRLQVQNNNLSGEIPVIWEN), and 341-366 (LKAEEKLILDLRNNMFSNVSSVLLNP). A helical membrane pass occupies residues 566 to 586 (IIIGAIAFFLVLSSLALVFFI). The Cytoplasmic portion of the chain corresponds to 587–959 (KRSKRKRKTR…SGVIPSIAPR (373 aa)). The Protein kinase domain maps to 631 to 906 (FSDLSQIGRG…RELENIYGLI (276 aa)). Residues 637–645 (IGRGGYGKV) and lysine 659 contribute to the ATP site. Aspartate 755 (proton acceptor) is an active-site residue.

This sequence belongs to the protein kinase superfamily. Ser/Thr protein kinase family.

The protein resides in the membrane. The catalysed reaction is L-seryl-[protein] + ATP = O-phospho-L-seryl-[protein] + ADP + H(+). It carries out the reaction L-threonyl-[protein] + ATP = O-phospho-L-threonyl-[protein] + ADP + H(+). This is Probable LRR receptor-like serine/threonine-protein kinase At5g37450 from Arabidopsis thaliana (Mouse-ear cress).